A 291-amino-acid polypeptide reads, in one-letter code: Bis(5'-nucleosyl)-tetraphosphatase, symmetrical (291 aa).

It belongs to the Ap4A hydrolase family.

It catalyses the reaction P(1),P(4)-bis(5'-adenosyl) tetraphosphate + H2O = 2 ADP + 2 H(+). Hydrolyzes diadenosine 5',5'''-P1,P4-tetraphosphate to yield ADP. This Coxiella burnetii (strain CbuG_Q212) (Coxiella burnetii (strain Q212)) protein is Bis(5'-nucleosyl)-tetraphosphatase, symmetrical.